The following is a 339-amino-acid chain: Protein FAM50A (339 aa).

The tract at residues 1-31 is disordered; sequence MAQYKGAASEAGRAMHLMKKREKQREQMEQM. Ala-2 is modified (N-acetylalanine). Lys-100 participates in a covalent cross-link: Glycyl lysine isopeptide (Lys-Gly) (interchain with G-Cter in SUMO2). The tract at residues 150 to 177 is disordered; the sequence is TTKKKKLGKNPDVDTSFLPDRDREEEEN. Positions 152-155 match the Nuclear localization signal motif; the sequence is KKKK. The span at 168-177 shows a compositional bias: basic and acidic residues; sequence PDRDREEEEN.

This sequence belongs to the FAM50 family. In terms of assembly, interacts with EFTUD2, a component of the spliceosome U5 complex. Interacts with DDX41, a component of the spliceosome C complex. As to expression, widely expressed in embryonic and adult tissues.

The protein resides in the nucleus. Probably involved in the regulation of pre-mRNA splicing. This chain is Protein FAM50A (Fam50a), found in Mus musculus (Mouse).